Consider the following 193-residue polypeptide: V-type sodium ATPase subunit E (193 aa).

Belongs to the V-ATPase E subunit family. The N-terminus is blocked.

Its function is as follows. Involved in ATP-driven sodium extrusion. In Enterococcus hirae (strain ATCC 9790 / DSM 20160 / JCM 8729 / LMG 6399 / NBRC 3181 / NCIMB 6459 / NCDO 1258 / NCTC 12367 / WDCM 00089 / R), this protein is V-type sodium ATPase subunit E (ntpE).